The primary structure comprises 184 residues: Phosducin-like protein 3 (184 aa).

The tract at residues His45–Asp184 is thioredoxin fold.

It belongs to the phosducin family.

In Dictyostelium discoideum (Social amoeba), this protein is Phosducin-like protein 3 (phlp3).